A 587-amino-acid chain; its full sequence is Probable terpene synthase 12 (587 aa).

The Mg(2+) site is built by Asp338, Asp342, and Glu489. Residues 338 to 342 (DDVYD) carry the DDXXD motif motif.

This sequence belongs to the terpene synthase family. Mg(2+) serves as cofactor.

Its function is as follows. Probable sesquiterpene synthase. This Ricinus communis (Castor bean) protein is Probable terpene synthase 12 (TPS12).